The chain runs to 308 residues: uncharacterized protein (308 aa).

An HTH lysR-type domain is found at 1 to 60; sequence MNYSLKQLKVFVTVAQEKSFSRAGERIGLSQSAVSHSVKELENHTGVRLLDRTTREVVLT. Positions 20-39 form a DNA-binding region, H-T-H motif; sequence FSRAGERIGLSQSAVSHSVK.

Belongs to the LysR transcriptional regulatory family.

This is an uncharacterized protein from Shigella flexneri.